The chain runs to 369 residues: Phosphoribosyl pyrophosphate synthase-associated protein 2 (369 aa).

Met1 carries the N-acetylmethionine modification. A phosphoserine mark is found at Ser219, Ser227, and Ser233.

It belongs to the ribose-phosphate pyrophosphokinase family. In terms of assembly, binds to PRPS1 and PRPS2. In terms of tissue distribution, ubiquitous.

Seems to play a negative regulatory role in 5-phosphoribose 1-diphosphate synthesis. This is Phosphoribosyl pyrophosphate synthase-associated protein 2 (Prpsap2) from Rattus norvegicus (Rat).